The sequence spans 436 residues: Trigger factor (436 aa).

Residues 164-249 (GDTVVIDFEG…IHEVKTKELP (86 aa)) enclose the PPIase FKBP-type domain.

It belongs to the FKBP-type PPIase family. Tig subfamily.

The protein resides in the cytoplasm. It catalyses the reaction [protein]-peptidylproline (omega=180) = [protein]-peptidylproline (omega=0). Involved in protein export. Acts as a chaperone by maintaining the newly synthesized protein in an open conformation. Functions as a peptidyl-prolyl cis-trans isomerase. This is Trigger factor from Ligilactobacillus salivarius (strain UCC118) (Lactobacillus salivarius).